The following is a 471-amino-acid chain: Methionine aminopeptidase 2 (471 aa).

Disordered regions lie at residues 16–80 (VVDD…IDRF) and 92–139 (CEHP…DFNR). A compositionally biased stretch (acidic residues) spans 32-47 (EDGDDNDDAVNEGEAV). The segment covering 52–65 (KKKKKKNKKKKKKG) has biased composition (basic residues). Residues 119–139 (AEERAKDDAKHGSDDPLDFNR) show a composition bias toward basic and acidic residues. Residue H224 coordinates substrate. The a divalent metal cation site is built by D244, D255, and H324. Substrate is bound at residue H332. E357 and E452 together coordinate a divalent metal cation.

Belongs to the peptidase M24A family. Methionine aminopeptidase eukaryotic type 2 subfamily. Co(2+) is required as a cofactor. Zn(2+) serves as cofactor. Requires Mn(2+) as cofactor. It depends on Fe(2+) as a cofactor.

The protein localises to the cytoplasm. The catalysed reaction is Release of N-terminal amino acids, preferentially methionine, from peptides and arylamides.. Cotranslationally removes the N-terminal methionine from nascent proteins. The N-terminal methionine is often cleaved when the second residue in the primary sequence is small and uncharged (Met-Ala-, Cys, Gly, Pro, Ser, Thr, or Val). This Yarrowia lipolytica (strain CLIB 122 / E 150) (Yeast) protein is Methionine aminopeptidase 2.